A 241-amino-acid chain; its full sequence is Phosphoribosylaminoimidazole-succinocarboxamide synthase (241 aa).

Belongs to the SAICAR synthetase family.

It carries out the reaction 5-amino-1-(5-phospho-D-ribosyl)imidazole-4-carboxylate + L-aspartate + ATP = (2S)-2-[5-amino-1-(5-phospho-beta-D-ribosyl)imidazole-4-carboxamido]succinate + ADP + phosphate + 2 H(+). The protein operates within purine metabolism; IMP biosynthesis via de novo pathway; 5-amino-1-(5-phospho-D-ribosyl)imidazole-4-carboxamide from 5-amino-1-(5-phospho-D-ribosyl)imidazole-4-carboxylate: step 1/2. This is Phosphoribosylaminoimidazole-succinocarboxamide synthase from Lacticaseibacillus casei (strain BL23) (Lactobacillus casei).